A 193-amino-acid polypeptide reads, in one-letter code: Ion-translocating oxidoreductase complex subunit A (193 aa).

A run of 6 helical transmembrane segments spans residues 4-24, 39-59, 71-91, 102-122, 134-154, and 171-191; these read FLLV…KFLG, IGMG…CWLV, FLRI…IETV, ALGI…LPLM, TLSG…FAGM, and PIAF…AGLV.

It belongs to the NqrDE/RnfAE family. In terms of assembly, the complex is composed of six subunits: RnfA, RnfB, RnfC, RnfD, RnfE and RnfG.

It localises to the cellular chromatophore membrane. Part of a membrane-bound complex that couples electron transfer with translocation of ions across the membrane. Required for nitrogen fixation. Involved in electron transfer to nitrogenase. In Rhodobacter capsulatus (Rhodopseudomonas capsulata), this protein is Ion-translocating oxidoreductase complex subunit A.